The sequence spans 131 residues: C-type natriuretic peptide 2 (131 aa).

The first 22 residues, 1-22, serve as a signal peptide directing secretion; the sequence is MLYPALLCAALLLIAPLGHTEG. Positions 23 to 109 are excised as a propeptide; it reads RTLYPSPDAI…KRAVTDRSRR (87 aa). Cys-115 and Cys-131 are joined by a disulfide.

It belongs to the natriuretic peptide family. Expressed in brain and to a low extent in atrium.

It localises to the secreted. In terms of biological role, exhibits natriuretic and vasodepressor activity. Has a cGMP-stimulating activity. This Oncorhynchus mykiss (Rainbow trout) protein is C-type natriuretic peptide 2.